The following is a 900-amino-acid chain: Periodic tryptophan protein 2 (900 aa).

WD repeat units follow at residues 10 to 47 (GAPY…SVTL), 50 to 89 (ETST…VLHR), 91 to 129 (TFKD…RAVL), 139 to 178 (NSDD…GVLN), and 185 to 229 (GHRD…VKMD). A disordered region spans residues 228–284 (MDESEDGHSEPPSPVTPDRADEVMVENGGGVGTELKKRKEYDGKGLESDEEGDDDDE). Over residues 261–274 (ELKKRKEYDGKGLE) the composition is skewed to basic and acidic residues. Position 275 is a phosphoserine (S275). Acidic residues predominate over residues 275–284 (SDEEGDDDDE). WD repeat units follow at residues 302 to 341 (QASA…CIHL), 344 to 384 (ISRQ…YILK), 387 to 426 (GHYF…CFIT), 429 to 468 (EHTN…NYKT), 472 to 512 (PTPR…IKDI), 515 to 554 (GHEA…GTVE), 557 to 596 (RHNH…LMYT), and 619 to 658 (SSGK…LLRR). Positions 684 to 720 (PIDLIDDDNSDEEGGIDKQSRGNLGYDLPGSRPNRGR) are disordered. The span at 687-697 (LIDDDNSDEEG) shows a compositional bias: acidic residues. A WD 14 repeat occupies 720 to 759 (RPIIRTKSLSIAPTGRSFAAATTEGVLIFSIDDTFIFDPT).

The protein belongs to the WD repeat PWP2 family. Component of the ribosomal small subunit (SSU) processome. Interacts with TBP1 in the nucleus. Expressed constitutively and ubiquitously; observed in seeds, seedlings, roots, leaves, stems, flowers and siliques.

It is found in the nucleus. It localises to the nucleolus. In terms of biological role, involved in nucleolar processing of pre-18S ribosomal RNA. Plays a role early in ribosome biogenesis, especially in the maturation of 5.8S rRNA. Required for guard cell functions. The protein is Periodic tryptophan protein 2 of Arabidopsis thaliana (Mouse-ear cress).